The sequence spans 28 residues: Conotoxin Cl6a (28 aa).

Intrachain disulfides connect cysteine 3-cysteine 13, cysteine 7-cysteine 19, and cysteine 12-cysteine 24.

Expressed by the venom duct.

The protein resides in the secreted. This Californiconus californicus (California cone) protein is Conotoxin Cl6a.